The chain runs to 255 residues: Polycomb group RING finger protein 5 (255 aa).

Residues 18–57 (CYICKGYLIKPTTVTECLHTFCKTCIVQHFEDSNDCPRCG) form an RING-type zinc finger. The segment at 97–132 (WKKNKPQENGQDDMSKVDKPKVDEEGDENQDDKDYH) is disordered. The span at 109–119 (DMSKVDKPKVD) shows a compositional bias: basic and acidic residues.

As to quaternary structure, component of a PRC1-like complex that contains PCGF5, RNF2 and UBE2D3. Interacts with RNF2; the interaction is direct. Interacts with CBX6, CBX7 and CBX8. Interacts with AUTS2; the interaction is direct. Identified in a complex that contains AUTS2, PCGF5, CSNK2B and RNF2.

The protein resides in the nucleus. Its subcellular location is the nucleoplasm. Component of a Polycomb group (PcG) multiprotein PRC1-like complex, a complex class required to maintain the transcriptionally repressive state of many genes, including Hox genes, throughout development. PcG PRC1 complex acts via chromatin remodeling and modification of histones; it mediates monoubiquitination of histone H2A 'Lys-119', rendering chromatin heritably changed in its expressibility. Within the PRC1-like complex, regulates RNF2 ubiquitin ligase activity. Plays a redundant role with PCGF3 as part of a PRC1-like complex that mediates monoubiquitination of histone H2A 'Lys-119' on the X chromosome and is required for normal silencing of one copy of the X chromosome in XX females. This chain is Polycomb group RING finger protein 5 (PCGF5), found in Bos taurus (Bovine).